Reading from the N-terminus, the 547-residue chain is Putative cysteine ligase BshC (547 aa).

The stretch at 462-484 (NLAEENLDRVIAQARFLRQKVEH) forms a coiled coil.

Belongs to the BshC family.

In terms of biological role, involved in bacillithiol (BSH) biosynthesis. May catalyze the last step of the pathway, the addition of cysteine to glucosamine malate (GlcN-Mal) to generate BSH. This Heliobacterium modesticaldum (strain ATCC 51547 / Ice1) protein is Putative cysteine ligase BshC.